A 207-amino-acid chain; its full sequence is LexA repressor (207 aa).

The segment at residues 28–48 is a DNA-binding region (H-T-H motif); it reads VREIAVAVGLASSSTVHGHLE. Residues serine 129 and lysine 167 each act as for autocatalytic cleavage activity in the active site.

The protein belongs to the peptidase S24 family. Homodimer.

The enzyme catalyses Hydrolysis of Ala-|-Gly bond in repressor LexA.. Represses a number of genes involved in the response to DNA damage (SOS response), including recA and lexA. In the presence of single-stranded DNA, RecA interacts with LexA causing an autocatalytic cleavage which disrupts the DNA-binding part of LexA, leading to derepression of the SOS regulon and eventually DNA repair. The chain is LexA repressor from Oceanobacillus iheyensis (strain DSM 14371 / CIP 107618 / JCM 11309 / KCTC 3954 / HTE831).